Reading from the N-terminus, the 371-residue chain is Cell division control protein 3 (371 aa).

One can recognise a Septin-type G domain in the interval 22–307; sequence AGIDFNIMTV…DEYKTREIGL (286 aa). The interval 32-39 is G1 motif; that stretch reads GSNGLGKS. Residues 32-39, Gly-116, 195-203, and Arg-257 each bind GTP; these read GSNGLGKS and KSDLLSDSE. Residues 113-116 are G3 motif; the sequence is EVDG. The G4 motif stretch occupies residues 194–197; the sequence is GKSD.

It belongs to the TRAFAC class TrmE-Era-EngA-EngB-Septin-like GTPase superfamily. Septin GTPase family. Component of the septin complex.

In terms of biological role, septins are GTPases involved in cytokinesis. The septins localize to the site of cleavage and act as a structural scaffold that recruits different components involved in diverse processes at specific stages during the cell cycle. Septins are also involved in cell morphogenesis, chitin deposition, cell cycle regulation, cell compartmentalization and spore wall formation. This is Cell division control protein 3 (CDC3) from Encephalitozoon cuniculi (strain GB-M1) (Microsporidian parasite).